The primary structure comprises 217 residues: 3-demethoxyubiquinol 3-hydroxylase (217 aa).

The Fe cation site is built by glutamate 66, glutamate 96, histidine 99, glutamate 148, glutamate 180, and histidine 183.

It belongs to the COQ7 family. Requires Fe cation as cofactor.

It localises to the cell membrane. The catalysed reaction is a 5-methoxy-2-methyl-3-(all-trans-polyprenyl)benzene-1,4-diol + AH2 + O2 = a 3-demethylubiquinol + A + H2O. It functions in the pathway cofactor biosynthesis; ubiquinone biosynthesis. In terms of biological role, catalyzes the hydroxylation of 2-nonaprenyl-3-methyl-6-methoxy-1,4-benzoquinol during ubiquinone biosynthesis. The sequence is that of 3-demethoxyubiquinol 3-hydroxylase from Xanthomonas axonopodis pv. citri (strain 306).